The sequence spans 770 residues: Glutamate carboxypeptidase 2 homolog (770 aa).

Residues 1–19 are Cytoplasmic-facing; sequence MPYVGVGAQKASTNLTGGP. A helical; Signal-anchor for type II membrane protein membrane pass occupies residues 20-40; sequence MMKAYAFVLAFFLLGLGVLAL. Over 41–770 the chain is Extracellular; it reads GKHHSGRRFN…CVVNTLRDVI (730 aa). N-linked (GlcNAc...) asparagine glycans are attached at residues N175 and N337. Residues 282 to 597 form a catalytic region; it reads SKKELFKGRT…QYWAELAKTF (316 aa). Zn(2+)-binding residues include H387 and D397. The N-linked (GlcNAc...) asparagine glycan is linked to N417. The active-site Nucleophile is E435. 2 residues coordinate Zn(2+): E436 and D464. 2 N-linked (GlcNAc...) asparagine glycosylation sites follow: N469 and N551. H562 is a binding site for Zn(2+). N-linked (GlcNAc...) asparagine glycans are attached at residues N606 and N630.

The protein belongs to the peptidase M28 family. M28B subfamily. The cofactor is Zn(2+).

It is found in the membrane. The catalysed reaction is Release of an unsubstituted, C-terminal glutamyl residue, typically from Ac-Asp-Glu or folylpoly-gamma-glutamates.. In Caenorhabditis briggsae, this protein is Glutamate carboxypeptidase 2 homolog.